A 293-amino-acid polypeptide reads, in one-letter code: Shikimate dehydrogenase (NADP(+)) (293 aa).

Shikimate-binding positions include serine 20–threonine 22 and threonine 72. Residue lysine 76 is the Proton acceptor of the active site. Residues asparagine 97 and aspartate 112 each contribute to the shikimate site. NADP(+) is bound by residues glycine 136–alanine 140 and isoleucine 230. Tyrosine 232 contacts shikimate. Glycine 253 is an NADP(+) binding site.

It belongs to the shikimate dehydrogenase family. Homodimer.

It catalyses the reaction shikimate + NADP(+) = 3-dehydroshikimate + NADPH + H(+). It participates in metabolic intermediate biosynthesis; chorismate biosynthesis; chorismate from D-erythrose 4-phosphate and phosphoenolpyruvate: step 4/7. In terms of biological role, involved in the biosynthesis of the chorismate, which leads to the biosynthesis of aromatic amino acids. Catalyzes the reversible NADPH linked reduction of 3-dehydroshikimate (DHSA) to yield shikimate (SA). This Arthrobacter sp. (strain FB24) protein is Shikimate dehydrogenase (NADP(+)).